Consider the following 328-residue polypeptide: Methionyl-tRNA formyltransferase (328 aa).

Residue 110-113 (SLLP) participates in (6S)-5,6,7,8-tetrahydrofolate binding.

This sequence belongs to the Fmt family.

The enzyme catalyses L-methionyl-tRNA(fMet) + (6R)-10-formyltetrahydrofolate = N-formyl-L-methionyl-tRNA(fMet) + (6S)-5,6,7,8-tetrahydrofolate + H(+). Attaches a formyl group to the free amino group of methionyl-tRNA(fMet). The formyl group appears to play a dual role in the initiator identity of N-formylmethionyl-tRNA by promoting its recognition by IF2 and preventing the misappropriation of this tRNA by the elongation apparatus. This is Methionyl-tRNA formyltransferase from Prochlorococcus marinus (strain MIT 9215).